The primary structure comprises 442 residues: Glycolipid 2-alpha-mannosyltransferase (442 aa).

Residues 1-11 lie on the Cytoplasmic side of the membrane; that stretch reads MALFLSKRLLR. The helical; Signal-anchor for type II membrane protein transmembrane segment at 12–30 threads the bilayer; it reads FTVIAGAVIVLLLTLNSNS. The stem region stretch occupies residues 31 to 118; the sequence is RTQQYIPSSI…YITPSFANKA (88 aa). The Lumenal portion of the chain corresponds to 31–442; that stretch reads RTQQYIPSSI…KPKNWKKFRE (412 aa). The segment at 68–95 is disordered; that stretch reads EQSALNSEASEDSEAMDEESKALKAAAE. Over residues 85 to 95 the composition is skewed to basic and acidic residues; the sequence is EESKALKAAAE. Residues 119–442 form a catalytic region; sequence GKPKACYVTL…KPKNWKKFRE (324 aa). An N-linked (GlcNAc...) asparagine glycan is attached at N197. E329 acts as the Nucleophile in catalysis.

This sequence belongs to the glycosyltransferase 15 family. The cofactor is Mn(2+).

The protein resides in the golgi apparatus membrane. It functions in the pathway protein modification; protein glycosylation. In terms of biological role, mannosyltransferase that transfers an alpha-D-mannosyl residue from GDP-mannose into lipid-linked oligosaccharide, forming an alpha-(1-&gt;2)-D-mannosyl-D-mannose linkage. Required for the attachment of the third mannose residue of O-linked saccharides. The sequence is that of Glycolipid 2-alpha-mannosyltransferase (KRE2) from Saccharomyces cerevisiae (strain ATCC 204508 / S288c) (Baker's yeast).